Reading from the N-terminus, the 244-residue chain is tRNA (guanine-N(1)-)-methyltransferase (244 aa).

S-adenosyl-L-methionine contacts are provided by residues G114 and 134–139; that span reads IGDYVL. Residues 220–244 are disordered; that stretch reads RRPDLLEKAGASPGKSGSNFGKHDA.

Belongs to the RNA methyltransferase TrmD family. In terms of assembly, homodimer.

It localises to the cytoplasm. It catalyses the reaction guanosine(37) in tRNA + S-adenosyl-L-methionine = N(1)-methylguanosine(37) in tRNA + S-adenosyl-L-homocysteine + H(+). Its function is as follows. Specifically methylates guanosine-37 in various tRNAs. The chain is tRNA (guanine-N(1)-)-methyltransferase from Rhizobium johnstonii (strain DSM 114642 / LMG 32736 / 3841) (Rhizobium leguminosarum bv. viciae).